The chain runs to 238 residues: Large ribosomal subunit protein uL2 (238 aa).

A disordered region spans residues histidine 198–alanine 238. Over residues glutamine 206–arginine 216 the composition is skewed to polar residues. The segment covering lysine 223–alanine 238 has biased composition (basic residues).

It belongs to the universal ribosomal protein uL2 family. In terms of assembly, part of the 50S ribosomal subunit. Forms a bridge to the 30S subunit in the 70S ribosome.

One of the primary rRNA binding proteins. Required for association of the 30S and 50S subunits to form the 70S ribosome, for tRNA binding and peptide bond formation. It has been suggested to have peptidyltransferase activity; this is somewhat controversial. Makes several contacts with the 16S rRNA in the 70S ribosome. This is Large ribosomal subunit protein uL2 from Sulfolobus acidocaldarius (strain ATCC 33909 / DSM 639 / JCM 8929 / NBRC 15157 / NCIMB 11770).